The chain runs to 509 residues: ATP synthase subunit alpha (509 aa).

Gly169–Thr176 lines the ATP pocket.

This sequence belongs to the ATPase alpha/beta chains family. In terms of assembly, F-type ATPases have 2 components, CF(1) - the catalytic core - and CF(0) - the membrane proton channel. CF(1) has five subunits: alpha(3), beta(3), gamma(1), delta(1), epsilon(1). CF(0) has three main subunits: a(1), b(2) and c(9-12). The alpha and beta chains form an alternating ring which encloses part of the gamma chain. CF(1) is attached to CF(0) by a central stalk formed by the gamma and epsilon chains, while a peripheral stalk is formed by the delta and b chains.

The protein resides in the cell inner membrane. It carries out the reaction ATP + H2O + 4 H(+)(in) = ADP + phosphate + 5 H(+)(out). Functionally, produces ATP from ADP in the presence of a proton gradient across the membrane. The alpha chain is a regulatory subunit. In Brucella ovis (strain ATCC 25840 / 63/290 / NCTC 10512), this protein is ATP synthase subunit alpha.